Consider the following 249-residue polypeptide: Exosome complex component Rrp41 (249 aa).

This sequence belongs to the RNase PH family. Rrp41 subfamily. As to quaternary structure, component of the archaeal exosome complex. Forms a hexameric ring-like arrangement composed of 3 Rrp41-Rrp42 heterodimers. The hexameric ring associates with a trimer of Rrp4 and/or Csl4 subunits.

It localises to the cytoplasm. In terms of biological role, catalytic component of the exosome, which is a complex involved in RNA degradation. Has 3'-&gt;5' exoribonuclease activity. Can also synthesize heteromeric RNA-tails. The sequence is that of Exosome complex component Rrp41 from Thermococcus kodakarensis (strain ATCC BAA-918 / JCM 12380 / KOD1) (Pyrococcus kodakaraensis (strain KOD1)).